Consider the following 367-residue polypeptide: Type II methyltransferase M.CviJI (367 aa).

An SAM-dependent MTase C5-type domain is found at 3-367; that stretch reads FRTLELFAGI…EYLGYLVQYD (365 aa). Residue Cys73 is part of the active site.

This sequence belongs to the class I-like SAM-binding methyltransferase superfamily. C5-methyltransferase family.

The enzyme catalyses a 2'-deoxycytidine in DNA + S-adenosyl-L-methionine = a 5-methyl-2'-deoxycytidine in DNA + S-adenosyl-L-homocysteine + H(+). In terms of biological role, a methylase that recognizes the double-stranded sequence 5'-RGCY-3', methylates C-3 on both strands, and protects the DNA from cleavage by the CviJI endonuclease. The sequence is that of Type II methyltransferase M.CviJI from Chlorella (PBCV-IL3A).